A 513-amino-acid chain; its full sequence is Probable cytosol aminopeptidase (513 aa).

Residues K277 and D282 each coordinate Mn(2+). K289 is a catalytic residue. 3 residues coordinate Mn(2+): D300, D359, and E361. The active site involves R363.

The protein belongs to the peptidase M17 family. Mn(2+) is required as a cofactor.

The protein localises to the cytoplasm. The catalysed reaction is Release of an N-terminal amino acid, Xaa-|-Yaa-, in which Xaa is preferably Leu, but may be other amino acids including Pro although not Arg or Lys, and Yaa may be Pro. Amino acid amides and methyl esters are also readily hydrolyzed, but rates on arylamides are exceedingly low.. The enzyme catalyses Release of an N-terminal amino acid, preferentially leucine, but not glutamic or aspartic acids.. In terms of biological role, presumably involved in the processing and regular turnover of intracellular proteins. Catalyzes the removal of unsubstituted N-terminal amino acids from various peptides. The polypeptide is Probable cytosol aminopeptidase (Mycobacterium sp. (strain JLS)).